We begin with the raw amino-acid sequence, 146 residues long: Probable cyclic pyranopterin monophosphate synthase (146 aa).

Substrate-binding positions include 66 to 68 and 102 to 103; these read LTH and ME. D117 is an active-site residue.

It belongs to the MoaC family. In terms of assembly, homohexamer; trimer of dimers.

The catalysed reaction is (8S)-3',8-cyclo-7,8-dihydroguanosine 5'-triphosphate = cyclic pyranopterin phosphate + diphosphate. It functions in the pathway cofactor biosynthesis; molybdopterin biosynthesis. Functionally, catalyzes the conversion of (8S)-3',8-cyclo-7,8-dihydroguanosine 5'-triphosphate to cyclic pyranopterin monophosphate (cPMP). This Aeropyrum pernix (strain ATCC 700893 / DSM 11879 / JCM 9820 / NBRC 100138 / K1) protein is Probable cyclic pyranopterin monophosphate synthase.